The primary structure comprises 696 residues: MHQDNSMRRAINQSRNGGSDSCDINNDREHDNINRNSYINNFHIENINSDKNEQSYIYCSDRAQVTDSILGNRKYTHEENINSTEMFSRTNYEYSNKNNVDIEMYNISNNNFYNGNNNGHSNDIIDYINNNNVNKDLSNTSNNADINTYIKKLTSNQSTAYCDGKGYNESANGSNFDINFRDVIKNNNNKNYKNNNHVPDDMLELGDRSFDSSFYIHNNVEEIDTERSNRLSFMSKLKMYFNYFGPGWIVAIAYLDPGNICGNLNVGLIRSDDFINVNSSVKDYTGYRLLWVLVYGHILGFIFHTLSMKLGHITGLDLAALCRKEFSSKFSYFLYICVQIAIWGAHLQAIIGVFVAINLILGIPVKIAILYTLIEAFAYSFLENKSLDLLEKVLSLLIGILVCCFMFNVFMTPINFQEVASSILYPRIPKGKLLDTMGLLGSVISAHIFYLHSNLTSKKKPVIYNDRMVKRYNKLGTIESGGSLLVSCITNCIIVLTFAEVNISGDDRKADYNLFNAYDVMKKYFGKTSMYIWSFGLLSSGNNASFMCEYASKSVFEGFLNKNVNPFFRVIFSRIILFIMLYAYVSYDKYTIDQLSNFINVVQILLLPLAIIPLYRFSIHKNVLGKFAIKGAFKYLVFVLVISIIVANFLLTLFDFLQYAPSNLYVIFIFISSIFYLLFIIYFFNMPITKTYYKDS.

A disordered region spans residues 1 to 31; it reads MHQDNSMRRAINQSRNGGSDSCDINNDREHD. The Cytoplasmic portion of the chain corresponds to 1-236; sequence MHQDNSMRRA…RSNRLSFMSK (236 aa). A compositionally biased stretch (polar residues) spans 11–24; the sequence is INQSRNGGSDSCDI. The chain crosses the membrane as a helical span at residues 237–255; that stretch reads LKMYFNYFGPGWIVAIAYL. Residues 256 to 288 are Vacuolar-facing; the sequence is DPGNICGNLNVGLIRSDDFINVNSSVKDYTGYR. Residue N278 is glycosylated (N-linked (GlcNAc...) asparagine). The helical transmembrane segment at 289–311 threads the bilayer; the sequence is LLWVLVYGHILGFIFHTLSMKLG. Topologically, residues 312–331 are cytoplasmic; that stretch reads HITGLDLAALCRKEFSSKFS. The chain crosses the membrane as a helical span at residues 332–357; sequence YFLYICVQIAIWGAHLQAIIGVFVAI. At 358 to 362 the chain is on the vacuolar side; it reads NLILG. Residues 363–382 form a helical membrane-spanning segment; that stretch reads IPVKIAILYTLIEAFAYSFL. Topologically, residues 383–393 are cytoplasmic; it reads ENKSLDLLEKV. The helical transmembrane segment at 394–416 threads the bilayer; sequence LSLLIGILVCCFMFNVFMTPINF. The Vacuolar portion of the chain corresponds to 417 to 435; sequence QEVASSILYPRIPKGKLLD. A helical membrane pass occupies residues 436–455; sequence TMGLLGSVISAHIFYLHSNL. The Cytoplasmic portion of the chain corresponds to 456 to 475; sequence TSKKKPVIYNDRMVKRYNKL. Residues 476 to 499 form a helical membrane-spanning segment; the sequence is GTIESGGSLLVSCITNCIIVLTFA. Residues 500–529 lie on the Vacuolar side of the membrane; it reads EVNISGDDRKADYNLFNAYDVMKKYFGKTS. N502 is a glycosylation site (N-linked (GlcNAc...) asparagine). Residues 530–546 form a helical membrane-spanning segment; that stretch reads MYIWSFGLLSSGNNASF. Over 547-566 the chain is Cytoplasmic; it reads MCEYASKSVFEGFLNKNVNP. Residues 567-585 traverse the membrane as a helical segment; the sequence is FFRVIFSRIILFIMLYAYV. Topologically, residues 586–596 are vacuolar; the sequence is SYDKYTIDQLS. A helical membrane pass occupies residues 597-615; the sequence is NFINVVQILLLPLAIIPLY. The Cytoplasmic portion of the chain corresponds to 616 to 634; that stretch reads RFSIHKNVLGKFAIKGAFK. The chain crosses the membrane as a helical span at residues 635–657; it reads YLVFVLVISIIVANFLLTLFDFL. Over 658-662 the chain is Vacuolar; that stretch reads QYAPS. The chain crosses the membrane as a helical span at residues 663–684; sequence NLYVIFIFISSIFYLLFIIYFF. The Cytoplasmic portion of the chain corresponds to 685–696; sequence NMPITKTYYKDS.

Belongs to the NRAMP (TC 2.A.55) family.

The protein localises to the vacuole membrane. The catalysed reaction is Fe(2+)(in) = Fe(2+)(out). Iron transporter. Required for parasite development during the blood stages. Required for full pathogenicity. This is Divalent metal transporter 1 from Plasmodium yoelii.